The primary structure comprises 457 residues: Adenylosuccinate synthetase isozyme 1 (457 aa).

Positions 1-24 (MSGTRASNDRPPGTGGVKRGRLQQ) are disordered. Residues 42 to 48 (GDEGKGK) and 70 to 72 (GHT) each bind GTP. Catalysis depends on aspartate 43, which acts as the Proton acceptor. Mg(2+) contacts are provided by aspartate 43 and glycine 70. Aspartate 43 contributes to the substrate binding site. IMP contacts are provided by residues 43–46 (DEGK), 68–71 (NAGH), threonine 163, arginine 177, asparagine 256, threonine 271, and arginine 335. Histidine 71 acts as the Proton donor in catalysis. 331-337 (VTTGRKR) contributes to the substrate binding site. GTP is bound by residues arginine 337, 363 to 365 (KLD), and 445 to 448 (GVGK).

Belongs to the adenylosuccinate synthetase family. As to quaternary structure, homodimer. Mg(2+) is required as a cofactor. As to expression, high levels in muscle.

It localises to the cytoplasm. It is found in the membrane. The enzyme catalyses IMP + L-aspartate + GTP = N(6)-(1,2-dicarboxyethyl)-AMP + GDP + phosphate + 2 H(+). Its pathway is purine metabolism; AMP biosynthesis via de novo pathway; AMP from IMP: step 1/2. With respect to regulation, weakly inhibited by AMP non-competitively to all substrates. Inhibited by IMP non-competitively with respect to GTP. Inhibited by fructose 1,6-bisphosphate competitively with respect to IMP. Functionally, component of the purine nucleotide cycle (PNC), which interconverts IMP and AMP to regulate the nucleotide levels in various tissues, and which contributes to glycolysis and ammoniagenesis. Catalyzes the first committed step in the biosynthesis of AMP from IMP. This Mus musculus (Mouse) protein is Adenylosuccinate synthetase isozyme 1 (Adss1).